The primary structure comprises 84 residues: Large ribosomal subunit protein bL28 (84 aa).

The protein belongs to the bacterial ribosomal protein bL28 family.

In Deinococcus geothermalis (strain DSM 11300 / CIP 105573 / AG-3a), this protein is Large ribosomal subunit protein bL28.